We begin with the raw amino-acid sequence, 629 residues long: tRNA uridine 5-carboxymethylaminomethyl modification enzyme MnmG (629 aa).

Residues 13 to 18 (GGGHAG), V125, and S180 each bind FAD. An NAD(+)-binding site is contributed by 273 to 287 (GPRYCPSIEDKVMRF). Residue Q370 coordinates FAD.

The protein belongs to the MnmG family. In terms of assembly, homodimer. Heterotetramer of two MnmE and two MnmG subunits. It depends on FAD as a cofactor.

It is found in the cytoplasm. Functionally, NAD-binding protein involved in the addition of a carboxymethylaminomethyl (cmnm) group at the wobble position (U34) of certain tRNAs, forming tRNA-cmnm(5)s(2)U34. The chain is tRNA uridine 5-carboxymethylaminomethyl modification enzyme MnmG from Escherichia coli O139:H28 (strain E24377A / ETEC).